Consider the following 216-residue polypeptide: Adenylate kinase (216 aa).

10–15 (GAGKGT) contributes to the ATP binding site. The tract at residues 30-59 (STGDMLRAAVKAGTPLGLELKKVMDAGQLV) is NMP. Residues Thr-31, Arg-36, 57 to 59 (QLV), 85 to 88 (GFPR), and Gln-92 contribute to the AMP site. Positions 122–159 (GRRVHLASGRTYHIQYNPPKVEGKDDETGEDLIQRDDD) are LID. ATP contacts are provided by residues Arg-123 and 132–133 (TY). The AMP site is built by Arg-156 and Arg-167. Gly-202 contacts ATP.

Belongs to the adenylate kinase family. Monomer.

It is found in the cytoplasm. It carries out the reaction AMP + ATP = 2 ADP. It participates in purine metabolism; AMP biosynthesis via salvage pathway; AMP from ADP: step 1/1. Its function is as follows. Catalyzes the reversible transfer of the terminal phosphate group between ATP and AMP. Plays an important role in cellular energy homeostasis and in adenine nucleotide metabolism. The polypeptide is Adenylate kinase (Pseudomonas putida (strain ATCC 700007 / DSM 6899 / JCM 31910 / BCRC 17059 / LMG 24140 / F1)).